The chain runs to 442 residues: Ribosomal protein uS12 methylthiotransferase RimO (442 aa).

The region spanning 5-117 (PSIGVVSLGC…VLDAIHAALP (113 aa)) is the MTTase N-terminal domain. Positions 14, 50, 79, 148, 152, and 155 each coordinate [4Fe-4S] cluster. The Radical SAM core domain occupies 134–371 (LTPPHYAYLK…MAVQEAISRQ (238 aa)). The TRAM domain maps to 374-441 (QRRVGQRQRV…AHDLYGMVVS (68 aa)).

This sequence belongs to the methylthiotransferase family. RimO subfamily. [4Fe-4S] cluster is required as a cofactor.

The protein resides in the cytoplasm. The catalysed reaction is L-aspartate(89)-[ribosomal protein uS12]-hydrogen + (sulfur carrier)-SH + AH2 + 2 S-adenosyl-L-methionine = 3-methylsulfanyl-L-aspartate(89)-[ribosomal protein uS12]-hydrogen + (sulfur carrier)-H + 5'-deoxyadenosine + L-methionine + A + S-adenosyl-L-homocysteine + 2 H(+). Catalyzes the methylthiolation of an aspartic acid residue of ribosomal protein uS12. This is Ribosomal protein uS12 methylthiotransferase RimO from Acidithiobacillus ferrooxidans (strain ATCC 53993 / BNL-5-31) (Leptospirillum ferrooxidans (ATCC 53993)).